The primary structure comprises 223 residues: Gastrula zinc finger protein XlCGF52.1 (223 aa).

8 consecutive C2H2-type zinc fingers follow at residues 6-27, 33-55, 61-83, 89-111, 117-139, 145-167, 173-195, and 201-223; these read FTCP…TEDH, FTCM…QRVH, YTCT…ISTH, FPCT…QRIH, FQCL…QRSH, YACS…ERIH, YECN…QKIH, and FTCT…QKIH.

It belongs to the krueppel C2H2-type zinc-finger protein family.

It localises to the nucleus. May be involved in transcriptional regulation. The polypeptide is Gastrula zinc finger protein XlCGF52.1 (Xenopus laevis (African clawed frog)).